Consider the following 656-residue polypeptide: Spermatogenesis-associated protein 13 (656 aa).

The segment covering 1–12 (MHPASVTTTSQD) has biased composition (polar residues). The interval 1-26 (MHPASVTTTSQDPCAPSGSCRGGRRR) is disordered. Position 82 is a phosphoserine (Ser82). A disordered region spans residues 85–115 (IGLDRVGRRRQMKTSNVSSDGGAESSALVDD). The ABR (APC-binding region) domain stretch occupies residues 102-154 (SSDGGAESSALVDDNGSEEDFSYEELCQANPRYLQPGGEQLAINELISDGSVV). Ser118 carries the phosphoserine modification. Residues 151 to 210 (GSVVCAEALWDHVTMDDQELGFKAGDVIQVLEASNKDWWWGRNEDKEAWFPASFVRLRVN) enclose the SH3 domain. Residues 215–242 (PENCSSSHGEEQDEDTSKARHKHPESQQ) are disordered. The 185-residue stretch at 244–428 (MRTNVIQEIM…KNVACLINER (185 aa)) folds into the DH domain. Residues 459-565 (ELIHSGELTK…WLQAYADERR (107 aa)) enclose the PH domain. The tract at residues 565-656 (RRVQEDQQMG…TFHKLTPFRK (92 aa)) is C-terminal tail.

In terms of assembly, interacts (via ABR and SH3 domain) with APC. The binding of APC enhances its GEF activity by relieving it from an autoinhibitory conformation, in which the ABR and SH3 domains are associated with the C-terminal tail. Interacts (via C-terminal tail) with PPP1R9B (via C-terminus). Interacts with RAC1. In terms of tissue distribution, expression is aberrantly enhanced in most colorectal tumors.

It localises to the cytoplasm. Its subcellular location is the cell projection. The protein localises to the filopodium. The protein resides in the lamellipodium. It is found in the ruffle membrane. It localises to the podosome. With respect to regulation, both the ABR and the SH3 domains contribute to maintaining the protein in an inhibited conformation by associating with the C-terminal tail. Binding of these domains to the C-terminal tail inhibits the activity of the protein by blocking a region that is required for its GEF activity. Its function is as follows. Acts as a guanine nucleotide exchange factor (GEF) for RHOA, RAC1 and CDC42 GTPases. Regulates cell migration and adhesion assembly and disassembly through a RAC1, PI3K, RHOA and AKT1-dependent mechanism. Increases both RAC1 and CDC42 activity, but decreases the amount of active RHOA. Required for MMP9 up-regulation via the JNK signaling pathway in colorectal tumor cells. Involved in tumor angiogenesis and may play a role in intestinal adenoma formation and tumor progression. This chain is Spermatogenesis-associated protein 13 (Spata13), found in Mus musculus (Mouse).